A 117-amino-acid polypeptide reads, in one-letter code: Cell cycle protein GpsB (117 aa).

A coiled-coil region spans residues 32-70 (LDNVIKDYDAFVKENQRLQDENERLLAKVDELTRQVQVG).

It belongs to the GpsB family. As to quaternary structure, forms polymers through the coiled coil domains. Interacts with PBP1, MreC and EzrA.

The protein localises to the cytoplasm. Divisome component that associates with the complex late in its assembly, after the Z-ring is formed, and is dependent on DivIC and PBP2B for its recruitment to the divisome. Together with EzrA, is a key component of the system that regulates PBP1 localization during cell cycle progression. Its main role could be the removal of PBP1 from the cell pole after pole maturation is completed. Also contributes to the recruitment of PBP1 to the division complex. Not essential for septum formation. This chain is Cell cycle protein GpsB, found in Levilactobacillus brevis (strain ATCC 367 / BCRC 12310 / CIP 105137 / JCM 1170 / LMG 11437 / NCIMB 947 / NCTC 947) (Lactobacillus brevis).